A 490-amino-acid polypeptide reads, in one-letter code: Betaine aldehyde dehydrogenase (490 aa).

K(+) contacts are provided by Thr-26, Ile-27, and Asp-93. Gly-150–Trp-152 contributes to the NAD(+) binding site. The Charge relay system role is filled by Lys-162. An NAD(+)-binding site is contributed by Lys-176–Glu-179. Residue Val-180 coordinates K(+). Gly-230–Ser-233 contributes to the NAD(+) binding site. Residue Leu-246 coordinates K(+). The active-site Proton acceptor is Glu-252. Residues Gly-254, Cys-286, and Glu-387 each contribute to the NAD(+) site. Cys-286 acts as the Nucleophile in catalysis. Cys-286 bears the Cysteine sulfenic acid (-SOH) mark. K(+) contacts are provided by Lys-457 and Gly-460. Residue Glu-464 is the Charge relay system of the active site.

The protein belongs to the aldehyde dehydrogenase family. As to quaternary structure, dimer of dimers. K(+) serves as cofactor.

The catalysed reaction is betaine aldehyde + NAD(+) + H2O = glycine betaine + NADH + 2 H(+). Its pathway is amine and polyamine biosynthesis; betaine biosynthesis via choline pathway; betaine from betaine aldehyde: step 1/1. Functionally, involved in the biosynthesis of the osmoprotectant glycine betaine. Catalyzes the irreversible oxidation of betaine aldehyde to the corresponding acid. The polypeptide is Betaine aldehyde dehydrogenase (Escherichia coli O6:K15:H31 (strain 536 / UPEC)).